We begin with the raw amino-acid sequence, 312 residues long: Ribonuclease Z (312 aa).

Positions 63, 65, 67, 68, 140, 211, and 269 each coordinate Zn(2+). Aspartate 67 serves as the catalytic Proton acceptor.

Belongs to the RNase Z family. In terms of assembly, homodimer. Requires Zn(2+) as cofactor.

The catalysed reaction is Endonucleolytic cleavage of RNA, removing extra 3' nucleotides from tRNA precursor, generating 3' termini of tRNAs. A 3'-hydroxy group is left at the tRNA terminus and a 5'-phosphoryl group is left at the trailer molecule.. Its function is as follows. Zinc phosphodiesterase, which displays some tRNA 3'-processing endonuclease activity. Probably involved in tRNA maturation, by removing a 3'-trailer from precursor tRNA. This is Ribonuclease Z from Shouchella clausii (strain KSM-K16) (Alkalihalobacillus clausii).